Reading from the N-terminus, the 76-residue chain is Kappa-actitoxin-Avd4m (76 aa).

The signal sequence occupies residues 1-19 (MNKALFLCLVVLCAAVVFA). The propeptide occupies 20 to 31 (AEDLQKAKHAPF). Intrachain disulfides connect Cys-37–Cys-72, Cys-39–Cys-65, and Cys-55–Cys-73.

It belongs to the sea anemone type 3 (BDS) potassium channel toxin family. As to expression, weakly expressed in the ectodermal tissue from the distal and proximal tentacles, body wall, and oral disk.

Its subcellular location is the secreted. It is found in the nematocyst. Functionally, blocks Kv3 voltage-gated potassium channels. Reduces blood pressure. The chain is Kappa-actitoxin-Avd4m from Anemonia viridis (Snakelocks anemone).